Reading from the N-terminus, the 553-residue chain is Dihydroxy-acid dehydratase (553 aa).

D78 contacts Mg(2+). C119 is a binding site for [2Fe-2S] cluster. Residues D120 and K121 each coordinate Mg(2+). K121 is modified (N6-carboxylysine). [2Fe-2S] cluster is bound at residue C191. Residue E444 participates in Mg(2+) binding. S470 acts as the Proton acceptor in catalysis.

It belongs to the IlvD/Edd family. Homodimer. [2Fe-2S] cluster is required as a cofactor. Requires Mg(2+) as cofactor.

The enzyme catalyses (2R)-2,3-dihydroxy-3-methylbutanoate = 3-methyl-2-oxobutanoate + H2O. The catalysed reaction is (2R,3R)-2,3-dihydroxy-3-methylpentanoate = (S)-3-methyl-2-oxopentanoate + H2O. It participates in amino-acid biosynthesis; L-isoleucine biosynthesis; L-isoleucine from 2-oxobutanoate: step 3/4. The protein operates within amino-acid biosynthesis; L-valine biosynthesis; L-valine from pyruvate: step 3/4. Functions in the biosynthesis of branched-chain amino acids. Catalyzes the dehydration of (2R,3R)-2,3-dihydroxy-3-methylpentanoate (2,3-dihydroxy-3-methylvalerate) into 2-oxo-3-methylpentanoate (2-oxo-3-methylvalerate) and of (2R)-2,3-dihydroxy-3-methylbutanoate (2,3-dihydroxyisovalerate) into 2-oxo-3-methylbutanoate (2-oxoisovalerate), the penultimate precursor to L-isoleucine and L-valine, respectively. The polypeptide is Dihydroxy-acid dehydratase (Methanosarcina barkeri (strain Fusaro / DSM 804)).